The sequence spans 305 residues: Axin interactor, dorsalization-associated protein B (305 aa).

Over residues 126–137 (ENLEVEEEEEDG) the composition is skewed to acidic residues. The interval 126 to 146 (ENLEVEEEEEDGGAGAGSPDL) is disordered. The tract at residues 153 to 220 (GTLLPRLPSE…RKEDTYVHFN (68 aa)) is axin-binding. The region spanning 156–303 (LPRLPSEPGM…LYLHLLQTLL (148 aa)) is the C2 Aida-type domain.

The protein belongs to the AIDA family.

Acts as a ventralizing factor during embryogenesis. Inhibits axin-mediated JNK activation by binding axin and disrupting axin homodimerization. This in turn antagonizes a Wnt/beta-catenin-independent dorsalization pathway activated by axin/JNK-signaling. In Xenopus laevis (African clawed frog), this protein is Axin interactor, dorsalization-associated protein B (aida-b).